Consider the following 209-residue polypeptide: MTFNIINLETWDRKEYFNHYFNQQTTYSVTKELDITLLKSMIKNKGYELYPALIHAIVSVINRNKVFRTGINSEGNLGYWDKLEPLYTVFNKETENFSNIWTESNASFTLFYNSYKNDLIKYKDKNEMFPKKPIPENTVPISMIPWIDFSSFNLNIGNNSRFLLPIITIGKFYSKDDKIYLPFPLQVHHAVCDGYHVSLFMNEFQNIIR.

His-189 (proton acceptor) is an active-site residue.

Belongs to the chloramphenicol acetyltransferase family. In terms of assembly, homotrimer.

The enzyme catalyses chloramphenicol + acetyl-CoA = chloramphenicol 3-acetate + CoA. This enzyme is an effector of chloramphenicol resistance in bacteria. The chain is Chloramphenicol acetyltransferase from Staphylococcus aureus.